The following is a 207-amino-acid chain: ATP-dependent Clp protease proteolytic subunit (207 aa).

Serine 111 functions as the Nucleophile in the catalytic mechanism. Histidine 136 is a catalytic residue.

Belongs to the peptidase S14 family. As to quaternary structure, fourteen ClpP subunits assemble into 2 heptameric rings which stack back to back to give a disk-like structure with a central cavity, resembling the structure of eukaryotic proteasomes.

It is found in the cytoplasm. It carries out the reaction Hydrolysis of proteins to small peptides in the presence of ATP and magnesium. alpha-casein is the usual test substrate. In the absence of ATP, only oligopeptides shorter than five residues are hydrolyzed (such as succinyl-Leu-Tyr-|-NHMec, and Leu-Tyr-Leu-|-Tyr-Trp, in which cleavage of the -Tyr-|-Leu- and -Tyr-|-Trp bonds also occurs).. Cleaves peptides in various proteins in a process that requires ATP hydrolysis. Has a chymotrypsin-like activity. Plays a major role in the degradation of misfolded proteins. This chain is ATP-dependent Clp protease proteolytic subunit, found in Pectobacterium atrosepticum (strain SCRI 1043 / ATCC BAA-672) (Erwinia carotovora subsp. atroseptica).